A 637-amino-acid chain; its full sequence is Zinc-transporting ATPase (637 aa).

4 helical membrane passes run 43–63 (GWLL…AFVI), 89–109 (IFAA…ILIF), 258–278 (GVLI…GWSW), and 286–306 (MVFM…PAAL). The active-site 4-aspartylphosphate intermediate is the D337. 2 residues coordinate Mg(2+): D535 and D539. The helical transmembrane segment at 599-619 (VICLLICANFLQAMELPFGVI) threads the bilayer.

Belongs to the cation transport ATPase (P-type) (TC 3.A.3) family. Type IB subfamily.

The protein localises to the cell membrane. The catalysed reaction is Zn(2+)(out) + ATP(in) + H2O(in) = Zn(2+)(in) + ADP(in) + phosphate(in) + H(+)(in). Its function is as follows. Couples the hydrolysis of ATP with the transport of zinc into the cell. Plays an important role in protecting cells against oxidative stress. ZosA-mediated zinc transport is required for post-transcriptional control of comK and competence development. This is Zinc-transporting ATPase (zosA) from Bacillus subtilis (strain 168).